The primary structure comprises 930 residues: Isoleucine--tRNA ligase (930 aa).

Residues 57 to 67 (PYANGHLHLGH) carry the 'HIGH' region motif. An L-isoleucyl-5'-AMP-binding site is contributed by Glu-555. The 'KMSKS' region motif lies at 596–600 (KMSKS). ATP is bound at residue Lys-599. Residues Cys-896, Cys-899, Cys-916, and Cys-919 each coordinate Zn(2+).

It belongs to the class-I aminoacyl-tRNA synthetase family. IleS type 1 subfamily. In terms of assembly, monomer. The cofactor is Zn(2+).

Its subcellular location is the cytoplasm. It catalyses the reaction tRNA(Ile) + L-isoleucine + ATP = L-isoleucyl-tRNA(Ile) + AMP + diphosphate. In terms of biological role, catalyzes the attachment of isoleucine to tRNA(Ile). As IleRS can inadvertently accommodate and process structurally similar amino acids such as valine, to avoid such errors it has two additional distinct tRNA(Ile)-dependent editing activities. One activity is designated as 'pretransfer' editing and involves the hydrolysis of activated Val-AMP. The other activity is designated 'posttransfer' editing and involves deacylation of mischarged Val-tRNA(Ile). In Moorella thermoacetica (strain ATCC 39073 / JCM 9320), this protein is Isoleucine--tRNA ligase.